We begin with the raw amino-acid sequence, 338 residues long: Phosphatidylglycerol--prolipoprotein diacylglyceryl transferase (338 aa).

4 helical membrane passes run Trp-24–Val-44, Leu-67–Tyr-87, Gly-115–Trp-135, and Phe-141–Gly-161. Arg-162 is an a 1,2-diacyl-sn-glycero-3-phospho-(1'-sn-glycerol) binding site. Helical transmembrane passes span Pro-224–Leu-244, Gly-252–Phe-272, and Gly-304–Leu-324.

This sequence belongs to the Lgt family.

It localises to the cell inner membrane. The catalysed reaction is L-cysteinyl-[prolipoprotein] + a 1,2-diacyl-sn-glycero-3-phospho-(1'-sn-glycerol) = an S-1,2-diacyl-sn-glyceryl-L-cysteinyl-[prolipoprotein] + sn-glycerol 1-phosphate + H(+). The protein operates within protein modification; lipoprotein biosynthesis (diacylglyceryl transfer). In terms of biological role, catalyzes the transfer of the diacylglyceryl group from phosphatidylglycerol to the sulfhydryl group of the N-terminal cysteine of a prolipoprotein, the first step in the formation of mature lipoproteins. The chain is Phosphatidylglycerol--prolipoprotein diacylglyceryl transferase from Treponema denticola (strain ATCC 35405 / DSM 14222 / CIP 103919 / JCM 8153 / KCTC 15104).